The sequence spans 225 residues: Putative ankyrin repeat protein RBE_1025 (225 aa).

ANK repeat units follow at residues 6–35, 41–71, 75–120, and 124–153; these read LSKDLLLSARANNNLAVIRILQDTTSAINP, NGKTALHWAVINLNPLITCYILKIEKVNVNI, TGFT…DVNI, and KGNTALHYAICKNNFFFIEELLSNNASPFI.

In Rickettsia bellii (strain RML369-C), this protein is Putative ankyrin repeat protein RBE_1025.